The primary structure comprises 1031 residues: Serine-repeat antigen protein 6 (1031 aa).

A signal peptide spans 1–24 (MICPIFFLYIINVLFTQYFIKCEG). Residue Asn-74 is glycosylated (N-linked (GlcNAc...) asparagine). The span at 91–101 (KVVSSSESGKG) shows a compositional bias: low complexity. Residues 91 to 163 (KVVSSSESGK…TESSSETLNK (73 aa)) are disordered. A compositionally biased stretch (polar residues) spans 104-139 (VSHTKVTSEGLSDTQPNVTQSVSSSTHTPGSLDSTM). Asn-120 carries an N-linked (GlcNAc...) asparagine glycan. The span at 140–158 (STEQHSSVSQSSLPTESSS) shows a compositional bias: low complexity. Residue Asn-449 is glycosylated (N-linked (GlcNAc...) asparagine). The tract at residues 490–567 (TLPSESPSES…GDTNYVYDFD (78 aa)) is disordered. Residues 492 to 505 (PSESPSESSSKSDS) are compositionally biased toward low complexity. The span at 511 to 535 (NDKDKNEDKDDMSKNSKEEFKNDDK) shows a compositional bias: basic and acidic residues. N-linked (GlcNAc...) asparagine glycosylation is present at Asn-544. Low complexity predominate over residues 554–564 (NINNGDTNYVY). An N-linked (GlcNAc...) asparagine glycan is attached at Asn-573. Residue Cys-644 is part of the active site. Asn-674 carries an N-linked (GlcNAc...) asparagine glycan. Catalysis depends on residues His-810 and Asn-835. N-linked (GlcNAc...) asparagine glycans are attached at residues Asn-929 and Asn-974.

Belongs to the peptidase C1 family. In terms of processing, just prior to merozoite egress from host erythrocytes, proteolytically cleaved by SUB1 to generate the active 75kDa form.

It localises to the parasitophorous vacuole lumen. Its subcellular location is the parasitophorous vacuole membrane. Its function is as follows. Cysteine protease which plays an essential role in merozoite egress from host erythrocytes. May cleave host SPTB/beta spectrin and ANK1/ankyrin-1 which disrupts host erythrocyte actin cytoskeleton and leads to host erythrocyte cell membrane rupture. The polypeptide is Serine-repeat antigen protein 6 (Plasmodium falciparum (isolate 3D7)).